A 380-amino-acid polypeptide reads, in one-letter code: Cytochrome b (380 aa).

Helical transmembrane passes span 34–54, 78–99, 114–134, and 179–199; these read FGSL…LLAM, WLIR…YLHI, WNTG…GYVL, and FFAL…IHLT. Heme b contacts are provided by His-84 and His-98. Positions 183 and 197 each coordinate heme b. His-202 contacts a ubiquinone. Helical transmembrane passes span 227–247, 289–309, 321–341, and 348–368; these read TKDT…ALFS, LGGV…PLLH, LSQL…WIGS, and FIII…ILFP.

Belongs to the cytochrome b family. As to quaternary structure, the cytochrome bc1 complex contains 11 subunits: 3 respiratory subunits (MT-CYB, CYC1 and UQCRFS1), 2 core proteins (UQCRC1 and UQCRC2) and 6 low-molecular weight proteins (UQCRH/QCR6, UQCRB/QCR7, UQCRQ/QCR8, UQCR10/QCR9, UQCR11/QCR10 and a cleavage product of UQCRFS1). This cytochrome bc1 complex then forms a dimer. The cofactor is heme b.

The protein resides in the mitochondrion inner membrane. In terms of biological role, component of the ubiquinol-cytochrome c reductase complex (complex III or cytochrome b-c1 complex) that is part of the mitochondrial respiratory chain. The b-c1 complex mediates electron transfer from ubiquinol to cytochrome c. Contributes to the generation of a proton gradient across the mitochondrial membrane that is then used for ATP synthesis. This is Cytochrome b (MT-CYB) from Aptenodytes patagonicus (King penguin).